A 543-amino-acid chain; its full sequence is Probable protein kinase UbiB (543 aa).

A Protein kinase domain is found at 123-501 (DFDSQALASA…QQRQGQSRYL (379 aa)). ATP contacts are provided by residues 129–137 (LASASIAQV) and Lys152. Asp287 serves as the catalytic Proton acceptor. A helical membrane pass occupies residues 517–539 (LADATEVSTGFIVAGALAWFIGW).

It belongs to the ABC1 family. UbiB subfamily.

Its subcellular location is the cell inner membrane. It participates in cofactor biosynthesis; ubiquinone biosynthesis [regulation]. Is probably a protein kinase regulator of UbiI activity which is involved in aerobic coenzyme Q (ubiquinone) biosynthesis. This Yersinia pseudotuberculosis serotype O:1b (strain IP 31758) protein is Probable protein kinase UbiB.